Here is a 546-residue protein sequence, read N- to C-terminus: uncharacterized protein (546 aa).

Disordered regions lie at residues 37 to 101 (KEND…NQKL), 269 to 300 (QNKA…QPEV), and 392 to 443 (LSDL…TSAC). 2 stretches are compositionally biased toward basic and acidic residues: residues 81 to 93 (DDVK…ENNQ) and 274 to 283 (ADLRKTESHG). Residues 284–298 (THSQSTPPQHSSSQP) show a composition bias toward low complexity.

This is an uncharacterized protein from Homo sapiens (Human).